We begin with the raw amino-acid sequence, 608 residues long: 1-deoxy-D-xylulose-5-phosphate synthase (608 aa).

Residues His80 and 121-123 (GHS) each bind thiamine diphosphate. Asp152 is a binding site for Mg(2+). Thiamine diphosphate contacts are provided by residues 153-154 (GA), Asn181, Tyr282, and Glu357. Residue Asn181 coordinates Mg(2+).

This sequence belongs to the transketolase family. DXPS subfamily. Homodimer. Requires Mg(2+) as cofactor. It depends on thiamine diphosphate as a cofactor.

The catalysed reaction is D-glyceraldehyde 3-phosphate + pyruvate + H(+) = 1-deoxy-D-xylulose 5-phosphate + CO2. The protein operates within metabolic intermediate biosynthesis; 1-deoxy-D-xylulose 5-phosphate biosynthesis; 1-deoxy-D-xylulose 5-phosphate from D-glyceraldehyde 3-phosphate and pyruvate: step 1/1. Catalyzes the acyloin condensation reaction between C atoms 2 and 3 of pyruvate and glyceraldehyde 3-phosphate to yield 1-deoxy-D-xylulose-5-phosphate (DXP). The sequence is that of 1-deoxy-D-xylulose-5-phosphate synthase from Buchnera aphidicola subsp. Acyrthosiphon pisum (strain 5A).